A 732-amino-acid polypeptide reads, in one-letter code: 1,4-alpha-glucan branching enzyme GlgB 1 (732 aa).

Aspartate 411 acts as the Nucleophile in catalysis. Glutamate 464 acts as the Proton donor in catalysis.

It belongs to the glycosyl hydrolase 13 family. GlgB subfamily. As to quaternary structure, monomer.

It carries out the reaction Transfers a segment of a (1-&gt;4)-alpha-D-glucan chain to a primary hydroxy group in a similar glucan chain.. It participates in glycan biosynthesis; glycogen biosynthesis. Its function is as follows. Catalyzes the formation of the alpha-1,6-glucosidic linkages in glycogen by scission of a 1,4-alpha-linked oligosaccharide from growing alpha-1,4-glucan chains and the subsequent attachment of the oligosaccharide to the alpha-1,6 position. In Xanthomonas euvesicatoria pv. vesicatoria (strain 85-10) (Xanthomonas campestris pv. vesicatoria), this protein is 1,4-alpha-glucan branching enzyme GlgB 1.